A 1059-amino-acid chain; its full sequence is Protein cappuccino (1059 aa).

2 stretches are compositionally biased toward polar residues: residues 62–80 and 90–123; these read AAVTQTPPGVTSSTPNESG and ATTSSPSLETQSTVIISFKSSQTPVQSQTNSAAS. 2 disordered regions span residues 62–146 and 448–647; these read AAVT…GTPT and QTES…TAPP. Over residues 133–142 the composition is skewed to pro residues; it reads LPLPPPPPGF. Residues 468 to 481 are compositionally biased toward basic and acidic residues; the sequence is SDNESAKEDGEKPH. An FH1 domain is found at 480–560; the sequence is PHAVAPPPPP…PPPPMSASPS (81 aa). The segment covering 483–541 has biased composition (pro residues); it reads VAPPPPPPPPPLHAFVAPPPPPPPPPPPPPPLANYGAPPPPPPPPPGSGSAPPPPPPAP. Residues 585 to 1032 form the FH2 domain; the sequence is RKSAVNPPKP…KKSKQAQIES (448 aa). Residues 620–629 are compositionally biased toward polar residues; that stretch reads TDSTENSGSS. Residues 1049–1059 are important for interaction with spir; that stretch reads KERMLMRRSKN.

It belongs to the formin homology family. Cappuccino subfamily. Interacts with wash. Interacts with spir.

Its subcellular location is the cytoplasm. The protein localises to the cytoskeleton. It localises to the cytosol. It is found in the membrane. The protein resides in the cytoplasmic vesicle membrane. Its function is as follows. Acts as an actin nucleation factor and promotes assembly of actin filaments together with spir. May play a role in intracellular vesicle transport along actin fibers, providing a novel link between actin cytoskeleton dynamics and intracellular transport. This Drosophila melanogaster (Fruit fly) protein is Protein cappuccino (capu).